The following is a 487-amino-acid chain: NADH-quinone oxidoreductase subunit N (487 aa).

A run of 14 helical transmembrane segments spans residues 16 to 36, 45 to 65, 79 to 99, 111 to 131, 133 to 153, 168 to 188, 212 to 232, 257 to 276, 281 to 298, 306 to 326, 333 to 353, 378 to 398, 413 to 435, and 457 to 477; these read VIMP…VNVF, LAWL…TGWG, NFAI…VLIS, GELY…AAAT, LMTI…LAGF, FLLG…IYGV, LLIG…AAPF, AAGF…AMIA, LLWI…FTAL, MLAY…ASGT, ILFY…VIVL, ALAM…AGFI, IWLA…RVIV, and LALV…SMIL.

This sequence belongs to the complex I subunit 2 family. In terms of assembly, NDH-1 is composed of 14 different subunits. Subunits NuoA, H, J, K, L, M, N constitute the membrane sector of the complex.

It is found in the cell inner membrane. It carries out the reaction a quinone + NADH + 5 H(+)(in) = a quinol + NAD(+) + 4 H(+)(out). NDH-1 shuttles electrons from NADH, via FMN and iron-sulfur (Fe-S) centers, to quinones in the respiratory chain. The immediate electron acceptor for the enzyme in this species is believed to be ubiquinone. Couples the redox reaction to proton translocation (for every two electrons transferred, four hydrogen ions are translocated across the cytoplasmic membrane), and thus conserves the redox energy in a proton gradient. The polypeptide is NADH-quinone oxidoreductase subunit N (Trichlorobacter lovleyi (strain ATCC BAA-1151 / DSM 17278 / SZ) (Geobacter lovleyi)).